We begin with the raw amino-acid sequence, 313 residues long: FAM172 family protein homolog Y75B8A.31 (313 aa).

A disordered region spans residues V293–V313. A compositionally biased stretch (basic and acidic residues) spans E296–K307.

Belongs to the FAM172 family.

In Caenorhabditis elegans, this protein is FAM172 family protein homolog Y75B8A.31.